We begin with the raw amino-acid sequence, 339 residues long: MSTSENTPFNGVASSTIVRATIVQASTVYNDTPATLEKANKFIVEAASKGSELVVFPEAFIGGYPRGFRFGLGVGVHNEEGRDEFRKYHASAIKVPGPEVEKLAELAGKNNVYLVMGAIEKDGYTLYCTALFFSPQGQFLGKHRKLMPTSLERCIWGQGDGSTIPVYDTPIGKLGAAICWENRMPLYRTALYAKGIELYCAPTADGSKEWQSSMLHIAIEGGCFVLSACQFCLRKDFPDHPDYLFTDWYDDKEPDSIVSQGGSVIISPLGQVLAGPNFESEGLITADLDLGDVARAKLYFDSVGHYSRPDVLHLTVNEHPKKPVTFISKVEKAEDDSNK.

Ser-2 bears the N-acetylserine mark. A CN hydrolase domain is found at 18 to 290 (VRATIVQAST…EGLITADLDL (273 aa)). Glu-58 (proton acceptor) is an active-site residue. Lys-145 functions as the Proton donor in the catalytic mechanism. Catalysis depends on Cys-179, which acts as the Nucleophile.

The protein belongs to the carbon-nitrogen hydrolase superfamily. Nitrilase family.

Its subcellular location is the cell membrane. It carries out the reaction a nitrile + 2 H2O = a carboxylate + NH4(+). Its function is as follows. Can convert indole-3-acetonitrile to the plant hormone indole-3-acetic acid. The polypeptide is Nitrilase 2 (NIT2) (Arabidopsis thaliana (Mouse-ear cress)).